The chain runs to 442 residues: Exodeoxyribonuclease 7 large subunit (442 aa).

The disordered stretch occupies residues 1–38; sequence MSDSTQFSLFDSGDDEPAKVTAPKRKVARKKRSSSSSD. The span at 22–33 shows a compositional bias: basic residues; it reads APKRKVARKKRS.

Belongs to the XseA family. Heterooligomer composed of large and small subunits.

Its subcellular location is the cytoplasm. It carries out the reaction Exonucleolytic cleavage in either 5'- to 3'- or 3'- to 5'-direction to yield nucleoside 5'-phosphates.. Bidirectionally degrades single-stranded DNA into large acid-insoluble oligonucleotides, which are then degraded further into small acid-soluble oligonucleotides. This chain is Exodeoxyribonuclease 7 large subunit, found in Rhodopirellula baltica (strain DSM 10527 / NCIMB 13988 / SH1).